The primary structure comprises 337 residues: Methionyl-tRNA formyltransferase (337 aa).

Residue 116 to 119 (SILP) coordinates (6S)-5,6,7,8-tetrahydrofolate.

This sequence belongs to the Fmt family.

It carries out the reaction L-methionyl-tRNA(fMet) + (6R)-10-formyltetrahydrofolate = N-formyl-L-methionyl-tRNA(fMet) + (6S)-5,6,7,8-tetrahydrofolate + H(+). Functionally, attaches a formyl group to the free amino group of methionyl-tRNA(fMet). The formyl group appears to play a dual role in the initiator identity of N-formylmethionyl-tRNA by promoting its recognition by IF2 and preventing the misappropriation of this tRNA by the elongation apparatus. The polypeptide is Methionyl-tRNA formyltransferase (Desulfovibrio desulfuricans (strain ATCC 27774 / DSM 6949 / MB)).